Here is a 113-residue protein sequence, read N- to C-terminus: Pro-corazonin (113 aa).

The N-terminal stretch at Met1–Ala19 is a signal peptide. At Gln20 the chain carries Pyrrolidone carboxylic acid. An Asparagine amide modification is found at Asn30. The segment at Leu74–Val96 is disordered. The segment covering Thr82–Val96 has biased composition (polar residues).

It belongs to the corazonin family. In terms of tissue distribution, four pairs of lateral neurosecretory cells in the brains of late instar larvae, pupae and adults.

It is found in the secreted. Cardioactive peptide. Corazonin is probably involved in the physiological regulation of the heart beat. This is Pro-corazonin from Galleria mellonella (Greater wax moth).